We begin with the raw amino-acid sequence, 116 residues long: Dynein light chain Tctex-type 3 (116 aa).

Tyrosine 4 is modified (3'-nitrotyrosine).

The protein belongs to the dynein light chain Tctex-type family. In terms of assembly, homodimer. The cytoplasmic dynein 1 complex consists of two catalytic heavy chains (HCs) and a number of non-catalytic subunits presented by intermediate chains (ICs), light intermediate chains (LICs) and light chains (LCs); the composition seems to vary in respect to the IC, LIC and LC composition. The heavy chain homodimer serves as a scaffold for the probable homodimeric assembly of the respective non-catalytic subunits. The ICs and LICs bind directly to the HC dimer and the LCs assemble on the IC dimer. DYNLT1 and DYNLT3 compete for association with dynein IC (DYNC1I1 or DYNC1I2). Self-associates. Interacts with DYNC1I1 and DYNC1I2. Interacts with BUB3. Interacts with SATB1 in nucleus to form complex with matrix attachment regions (MARs) of DNA.

The protein resides in the nucleus. It localises to the cytoplasm. Its subcellular location is the cytoskeleton. It is found in the chromosome. The protein localises to the centromere. The protein resides in the kinetochore. Acts as one of several non-catalytic accessory components of the cytoplasmic dynein 1 complex that are thought to be involved in linking dynein to cargos and to adapter proteins that regulate dynein function. Cytoplasmic dynein 1 acts as a motor for the intracellular retrograde motility of vesicles and organelles along microtubules. Probably binds BUB3 as part of transport cargo. Required for the efficient progression through mitosis. This chain is Dynein light chain Tctex-type 3 (DYNLT3), found in Ovis aries (Sheep).